The chain runs to 503 residues: Probable cytosol aminopeptidase (503 aa).

Positions 274 and 279 each coordinate Mn(2+). Lys286 is a catalytic residue. Asp297, Asp356, and Glu358 together coordinate Mn(2+). Arg360 is an active-site residue.

The protein belongs to the peptidase M17 family. Mn(2+) serves as cofactor.

It is found in the cytoplasm. The catalysed reaction is Release of an N-terminal amino acid, Xaa-|-Yaa-, in which Xaa is preferably Leu, but may be other amino acids including Pro although not Arg or Lys, and Yaa may be Pro. Amino acid amides and methyl esters are also readily hydrolyzed, but rates on arylamides are exceedingly low.. The enzyme catalyses Release of an N-terminal amino acid, preferentially leucine, but not glutamic or aspartic acids.. In terms of biological role, presumably involved in the processing and regular turnover of intracellular proteins. Catalyzes the removal of unsubstituted N-terminal amino acids from various peptides. This chain is Probable cytosol aminopeptidase, found in Burkholderia orbicola (strain MC0-3).